Consider the following 146-residue polypeptide: Snaclec stejaggregin-B subunit beta-2 (146 aa).

Residues 1 to 23 (MGRFIFVSFGLLVVFLSLSGSGA) form the signal peptide. Residues 32–143 (YDLYCYRVFQ…CSQTYPFVCK (112 aa)) enclose the C-type lectin domain. Cystine bridges form between Cys53–Cys142 and Cys119–Cys134.

The protein belongs to the snaclec family. As to quaternary structure, heteromultimer; disulfide-linked. As to expression, expressed by the venom gland.

The protein localises to the secreted. In terms of biological role, interferes with one step of hemostasis (modulation of platelet aggregation, or coagulation cascade, for example). The chain is Snaclec stejaggregin-B subunit beta-2 from Trimeresurus stejnegeri (Chinese green tree viper).